Consider the following 940-residue polypeptide: Isoleucine--tRNA ligase (940 aa).

The 'HIGH' region motif lies at Pro58–His68. Glu564 contacts L-isoleucyl-5'-AMP. A 'KMSKS' region motif is present at residues Lys605–Ser609. An ATP-binding site is contributed by Lys608. Zn(2+) contacts are provided by Cys903, Cys906, Cys923, and Cys926.

It belongs to the class-I aminoacyl-tRNA synthetase family. IleS type 1 subfamily. In terms of assembly, monomer. It depends on Zn(2+) as a cofactor.

The protein localises to the cytoplasm. The catalysed reaction is tRNA(Ile) + L-isoleucine + ATP = L-isoleucyl-tRNA(Ile) + AMP + diphosphate. Functionally, catalyzes the attachment of isoleucine to tRNA(Ile). As IleRS can inadvertently accommodate and process structurally similar amino acids such as valine, to avoid such errors it has two additional distinct tRNA(Ile)-dependent editing activities. One activity is designated as 'pretransfer' editing and involves the hydrolysis of activated Val-AMP. The other activity is designated 'posttransfer' editing and involves deacylation of mischarged Val-tRNA(Ile). This is Isoleucine--tRNA ligase from Shewanella pealeana (strain ATCC 700345 / ANG-SQ1).